We begin with the raw amino-acid sequence, 417 residues long: Gamma-glutamyl phosphate reductase (417 aa).

Belongs to the gamma-glutamyl phosphate reductase family.

The protein resides in the cytoplasm. It catalyses the reaction L-glutamate 5-semialdehyde + phosphate + NADP(+) = L-glutamyl 5-phosphate + NADPH + H(+). It functions in the pathway amino-acid biosynthesis; L-proline biosynthesis; L-glutamate 5-semialdehyde from L-glutamate: step 2/2. Functionally, catalyzes the NADPH-dependent reduction of L-glutamate 5-phosphate into L-glutamate 5-semialdehyde and phosphate. The product spontaneously undergoes cyclization to form 1-pyrroline-5-carboxylate. The protein is Gamma-glutamyl phosphate reductase of Legionella pneumophila subsp. pneumophila (strain Philadelphia 1 / ATCC 33152 / DSM 7513).